Here is a 335-residue protein sequence, read N- to C-terminus: NAC domain-containing protein 40 (335 aa).

The region spanning 14–156 (LFPGFRFSPT…ALVVCRLRKN (143 aa)) is the NAC domain. A DNA-binding region spans residues 112–162 (VGTKRTLVFHIGRAPRGERTEWIMHEYCIHGAPQDALVVCRLRKNADFRAS). Polar residues predominate over residues 245-254 (PTNPTHQETI). A disordered region spans residues 245–267 (PTNPTHQETISSESSSKRSKCGI). The chain crosses the membrane as a helical span at residues 313 to 333 (VLATTVFLAILFSFFWTVLIA).

Proteolytically cleaved, probably by metalloprotease activity. This cleavage mediates a translocation from the plasma membrane to the nucleus. In terms of tissue distribution, expressed in seeds, leaves, roots and inflorescence. Expressed in roots, rosette leaves, cauline leaves, shoot apex, stems and flowers.

The protein resides in the cell membrane. The protein localises to the nucleus. Functionally, transcriptional activator activated by proteolytic cleavage through regulated intramembrane proteolysis (RIP), probably via metalloprotease activity. Regulates gibberellic acid-mediated salt-responsive repression of seed germination and flowering via FT, thus delaying seed germination under high salinity conditions. This is NAC domain-containing protein 40 from Arabidopsis thaliana (Mouse-ear cress).